An 863-amino-acid chain; its full sequence is Alanine--tRNA ligase (863 aa).

Positions 552, 556, 654, and 658 each coordinate Zn(2+).

Belongs to the class-II aminoacyl-tRNA synthetase family. Zn(2+) is required as a cofactor.

It is found in the cytoplasm. It catalyses the reaction tRNA(Ala) + L-alanine + ATP = L-alanyl-tRNA(Ala) + AMP + diphosphate. Functionally, catalyzes the attachment of alanine to tRNA(Ala) in a two-step reaction: alanine is first activated by ATP to form Ala-AMP and then transferred to the acceptor end of tRNA(Ala). Also edits incorrectly charged Ser-tRNA(Ala) and Gly-tRNA(Ala) via its editing domain. The polypeptide is Alanine--tRNA ligase (Nitrosomonas europaea (strain ATCC 19718 / CIP 103999 / KCTC 2705 / NBRC 14298)).